The chain runs to 717 residues: Polyribonucleotide nucleotidyltransferase (717 aa).

Mg(2+) is bound by residues aspartate 487 and aspartate 493. Residues 554–613 (PRITVINVPKDKIRDVIGTGGKVIREIVEYSGCKIDIEDDGTIKIAATSDEQAQKAIDRI) form the KH domain. Residues 623–691 (GQIYTGKVVK…DRGKVKLSMR (69 aa)) enclose the S1 motif domain.

Belongs to the polyribonucleotide nucleotidyltransferase family. Mg(2+) serves as cofactor.

The protein resides in the cytoplasm. The enzyme catalyses RNA(n+1) + phosphate = RNA(n) + a ribonucleoside 5'-diphosphate. In terms of biological role, involved in mRNA degradation. Catalyzes the phosphorolysis of single-stranded polyribonucleotides processively in the 3'- to 5'-direction. In Acidiphilium cryptum (strain JF-5), this protein is Polyribonucleotide nucleotidyltransferase.